A 206-amino-acid polypeptide reads, in one-letter code: Fibroblast growth factor 4 (206 aa).

Residues 1–30 (MSGPGTAAVALLPAVLLALLAPWAGRGGAA) form the signal peptide.

It belongs to the heparin-binding growth factors family. Interacts with FGFR1, FGFR2, FGFR3 and FGFR4. Affinity between fibroblast growth factors (FGFs) and their receptors is increased by heparan sulfate glycosaminoglycans that function as coreceptors.

It is found in the secreted. Its function is as follows. Plays an important role in the regulation of embryonic development, cell proliferation, and cell differentiation. Required for normal limb and cardiac valve development during embryogenesis. May play a role in embryonic molar tooth bud development via inducing the expression of MSX1, MSX2 and MSX1-mediated expression of SDC1 in dental mesenchyme cells. In Homo sapiens (Human), this protein is Fibroblast growth factor 4.